Consider the following 325-residue polypeptide: L-lactate dehydrogenase 1 (325 aa).

Residues V17, D38, K43, Y68, and 82 to 83 (GA) each bind NAD(+). Residues Q85, R91, and 123-126 (NPVD) contribute to the substrate site. Residues 121-123 (AAN) and S146 contribute to the NAD(+) site. 151 to 154 (DTAR) provides a ligand contact to substrate. 2 residues coordinate beta-D-fructose 1,6-bisphosphate: R156 and H171. The active-site Proton acceptor is H178. Residue Y223 is modified to Phosphotyrosine. T232 is a substrate binding site.

Belongs to the LDH/MDH superfamily. LDH family. As to quaternary structure, homotetramer.

Its subcellular location is the cytoplasm. It carries out the reaction (S)-lactate + NAD(+) = pyruvate + NADH + H(+). It functions in the pathway fermentation; pyruvate fermentation to lactate; (S)-lactate from pyruvate: step 1/1. Allosterically activated by fructose 1,6-bisphosphate (FBP). Functionally, catalyzes the conversion of lactate to pyruvate. The polypeptide is L-lactate dehydrogenase 1 (Lactococcus lactis subsp. cremoris (Streptococcus cremoris)).